Here is a 3078-residue protein sequence, read N- to C-terminus: Probable polyketide synthase 34 (3078 aa).

A Ketosynthase family 3 (KS3) domain is found at 28 to 462; sequence SGDVAVIGIG…GSNVCLILSE (435 aa). Active-site for beta-ketoacyl synthase activity residues include Cys-200, His-339, and His-385. Positions 665–698 are acyl/malonyl transferase; that stretch reads GVSADIIIGHSLGEISSSYCSGIIDFQTLCYLTY. Catalysis depends on Ser-675, which acts as the For acyl/malonyl transferase activity. The N-terminal hotdog fold stretch occupies residues 954–1083; that stretch reads HEKIKNEGPS…GNFSLTKHNI (130 aa). The 311-residue stretch at 954-1264 folds into the PKS/mFAS DH domain; sequence HEKIKNEGPS…CTIVGSNPDS (311 aa). The Proton acceptor; for dehydratase activity role is filled by His-995. The tract at residues 1099 to 1264 is C-terminal hotdog fold; that stretch reads NFTSISKQDL…CTIVGSNPDS (166 aa). Asp-1171 (proton donor; for dehydratase activity) is an active-site residue. Positions 1375–1396 are disordered; sequence NINNNNNNNNNNNNNNNNNSNG. Residues 2541–2618 enclose the Carrier domain; the sequence is DNNEIIRSTI…QSIEIIKSAH (78 aa). O-(pantetheine 4'-phosphoryl)serine is present on Ser-2578. Disordered regions lie at residues 2617 to 2640 and 2739 to 2761; these read AHNNNNNNNNNNNNNNNNNNNNNN and NKGSPNQRLNSNIESGDNSDNNS. Positions 2619–2640 are enriched in low complexity; sequence NNNNNNNNNNNNNNNNNNNNNN. Positions 2621–2652 form a coiled coil; the sequence is NNNNNNNNNNNNNNNNNNNNLVKKEQQSLDEF.

Pantetheine 4'-phosphate is required as a cofactor.

Probable polyketide synthase. The protein is Probable polyketide synthase 34 (pks34) of Dictyostelium discoideum (Social amoeba).